The primary structure comprises 387 residues: 3-ketoacyl-CoA thiolase (387 aa).

Cysteine 91 functions as the Acyl-thioester intermediate in the catalytic mechanism. Residues histidine 343 and cysteine 373 each act as proton acceptor in the active site.

Belongs to the thiolase-like superfamily. Thiolase family. Heterotetramer of two alpha chains (FadB) and two beta chains (FadA).

It localises to the cytoplasm. The enzyme catalyses an acyl-CoA + acetyl-CoA = a 3-oxoacyl-CoA + CoA. Its pathway is lipid metabolism; fatty acid beta-oxidation. Catalyzes the final step of fatty acid oxidation in which acetyl-CoA is released and the CoA ester of a fatty acid two carbons shorter is formed. In Yersinia enterocolitica serotype O:8 / biotype 1B (strain NCTC 13174 / 8081), this protein is 3-ketoacyl-CoA thiolase.